We begin with the raw amino-acid sequence, 446 residues long: Phosphoglucosamine mutase (446 aa).

The Phosphoserine intermediate role is filled by S100. Residues S100, D241, D243, and D245 each contribute to the Mg(2+) site. S100 carries the post-translational modification Phosphoserine.

The protein belongs to the phosphohexose mutase family. Mg(2+) serves as cofactor. In terms of processing, activated by phosphorylation.

It carries out the reaction alpha-D-glucosamine 1-phosphate = D-glucosamine 6-phosphate. In terms of biological role, catalyzes the conversion of glucosamine-6-phosphate to glucosamine-1-phosphate. This Methylorubrum populi (strain ATCC BAA-705 / NCIMB 13946 / BJ001) (Methylobacterium populi) protein is Phosphoglucosamine mutase.